The sequence spans 660 residues: Arginine--tRNA ligase, cytoplasmic (660 aa).

Residue Met-1 is modified to N-acetylmethionine. A could be involved in the assembly of the multisynthetase complex region spans residues 1–72; sequence MDGLVAQCSA…QEERRKPTKN (72 aa). L-arginine-binding positions include 200-202, His-211, Tyr-384, Asp-388, and Gln-412; that span reads SPN. Residues 201 to 212 carry the 'HIGH' region motif; the sequence is PNIAKEMHVGHL. The interaction with tRNA stretch occupies residues 529-543; it reads NTAAYLLYAFTRIRS.

Belongs to the class-I aminoacyl-tRNA synthetase family. As to quaternary structure, interacts (via N-terminus) with AIMP1 (via N-terminus); this stimulates its catalytic activity. Interacts (via N-terminus) with LARS2 (via C-terminus). Monomer. Part of a multisubunit complex that groups tRNA ligases for Arg (RARS1), Asp (DARS1), Gln (QARS1), Ile (IARS1), Leu (LARS1), Lys (KARS1), Met (MARS1) the bifunctional ligase for Glu and Pro (EPRS1) and the auxiliary subunits AIMP1/p43, AIMP2/p38 and EEF1E1/p18. Interacts with QARS1. Part of a complex composed of RARS1, QARS1 and AIMP1.

The protein localises to the cytoplasm. The protein resides in the cytosol. The enzyme catalyses tRNA(Arg) + L-arginine + ATP = L-arginyl-tRNA(Arg) + AMP + diphosphate. Forms part of a macromolecular complex that catalyzes the attachment of specific amino acids to cognate tRNAs during protein synthesis. Modulates the secretion of AIMP1 and may be involved in generation of the inflammatory cytokine EMAP2 from AIMP1. The polypeptide is Arginine--tRNA ligase, cytoplasmic (Rars1) (Mus musculus (Mouse)).